Reading from the N-terminus, the 151-residue chain is Large ribosomal subunit protein bL9 (151 aa).

The protein belongs to the bacterial ribosomal protein bL9 family.

Its function is as follows. Binds to the 23S rRNA. In Lactobacillus johnsonii (strain CNCM I-12250 / La1 / NCC 533), this protein is Large ribosomal subunit protein bL9.